A 30-amino-acid chain; its full sequence is Beta-endorphin-2 (30 aa).

Tyr1 bears the N-acetyltyrosine mark.

It belongs to the POMC family.

The protein resides in the secreted. This chain is Beta-endorphin-2, found in Oncorhynchus keta (Chum salmon).